The sequence spans 347 residues: Ketol-acid reductoisomerase (NADP(+)) (347 aa).

The region spanning 3 to 182 (TKMFYDKDID…GSGCAGILET (180 aa)) is the KARI N-terminal Rossmann domain. Residues 26 to 29 (YGAQ), R49, S53, and 83 to 86 (DELQ) contribute to the NADP(+) site. Residue H108 is part of the active site. Residue G134 participates in NADP(+) binding. One can recognise a KARI C-terminal knotted domain in the interval 183 to 328 (TFEEETTEDL…KKVRAMMPWI (146 aa)). Residues D191, E195, E227, and E231 each contribute to the Mg(2+) site. S252 is a binding site for substrate.

The protein belongs to the ketol-acid reductoisomerase family. It depends on Mg(2+) as a cofactor.

It catalyses the reaction (2R)-2,3-dihydroxy-3-methylbutanoate + NADP(+) = (2S)-2-acetolactate + NADPH + H(+). It carries out the reaction (2R,3R)-2,3-dihydroxy-3-methylpentanoate + NADP(+) = (S)-2-ethyl-2-hydroxy-3-oxobutanoate + NADPH + H(+). The protein operates within amino-acid biosynthesis; L-isoleucine biosynthesis; L-isoleucine from 2-oxobutanoate: step 2/4. Its pathway is amino-acid biosynthesis; L-valine biosynthesis; L-valine from pyruvate: step 2/4. Functionally, involved in the biosynthesis of branched-chain amino acids (BCAA). Catalyzes an alkyl-migration followed by a ketol-acid reduction of (S)-2-acetolactate (S2AL) to yield (R)-2,3-dihydroxy-isovalerate. In the isomerase reaction, S2AL is rearranged via a Mg-dependent methyl migration to produce 3-hydroxy-3-methyl-2-ketobutyrate (HMKB). In the reductase reaction, this 2-ketoacid undergoes a metal-dependent reduction by NADPH to yield (R)-2,3-dihydroxy-isovalerate. This Leuconostoc mesenteroides subsp. cremoris protein is Ketol-acid reductoisomerase (NADP(+)).